A 351-amino-acid polypeptide reads, in one-letter code: 5-deoxyribose 1-phosphate isomerase (351 aa).

Substrate is bound by residues 48-50 (RGA), Arg-91, and Gln-198. The active-site Proton donor is Asp-239. Residue 249–250 (NK) participates in substrate binding.

Belongs to the EIF-2B alpha/beta/delta subunits family. DrdI subfamily.

It carries out the reaction 5-deoxy-alpha-D-ribose 1-phosphate = 5-deoxy-D-ribulose 1-phosphate. It functions in the pathway carbohydrate degradation. Catalyzes the isomerization of 5-deoxy-alpha-D-ribose 1-phosphate to 5-deoxy-D-ribulose 1-phosphate, as part of a 5-deoxyribose salvage pathway that recycles this toxic radical SAM enzyme by-product to mainstream metabolites. The sequence is that of 5-deoxyribose 1-phosphate isomerase from Moorella thermoacetica (strain ATCC 39073 / JCM 9320).